A 117-amino-acid polypeptide reads, in one-letter code: Non-specific lipid-transfer protein 1 (117 aa).

Residues 1 to 25 form the signal peptide; that stretch reads MAGLVKLSCLVLACMIVAGPIATNA. Intrachain disulfides connect Cys-29–Cys-76, Cys-39–Cys-53, Cys-54–Cys-99, and Cys-74–Cys-113.

Belongs to the plant LTP family.

Its function is as follows. Plant non-specific lipid-transfer proteins transfer phospholipids as well as galactolipids across membranes. May play a role in wax or cutin deposition in the cell walls of expanding epidermal cells and certain secretory tissues. This chain is Non-specific lipid-transfer protein 1 (LTP1), found in Brassica napus (Rape).